A 389-amino-acid chain; its full sequence is MPSDDFVKTARKALISHSVSIQNYTEDDCQIAFHATTNSFMQTIRLVHIFFCTFGAISSSLFIYVLLNSSSRNLHRNLRISLASLAFAALIACLQLDFIAFYHLALTLTADNACDSMYEARKCAILRFPVVLSIYATLCGIIVLAIERTIATLKYKTYEANGSRVVGLVLVTGQWFVCIIVAVFSVLLRSDPGYVHYCTAYVSHPRTSVFSLCFMSALEVATLVYFVLLLQSNQRRQVNEFVNKAMHSLSERYQLQENVRIMKILIPSITVHAILGFIGLGSMLAFAIIYRYADERLIVGFAPFSEVVLLVIPIYAVVFPIVAVVQNKQLRLASRRALPFLFNPESPETSEMLPADPPPLHKIITSRPSRQLEKESNTHFDLLNEMWKK.

Residues 1-45 lie on the Extracellular side of the membrane; the sequence is MPSDDFVKTARKALISHSVSIQNYTEDDCQIAFHATTNSFMQTIR. N-linked (GlcNAc...) asparagine glycosylation occurs at Asn23. A helical transmembrane segment spans residues 46-66; the sequence is LVHIFFCTFGAISSSLFIYVL. Over 67–81 the chain is Cytoplasmic; that stretch reads LNSSSRNLHRNLRIS. The chain crosses the membrane as a helical span at residues 82–102; the sequence is LASLAFAALIACLQLDFIAFY. The Extracellular segment spans residues 103–123; the sequence is HLALTLTADNACDSMYEARKC. Cysteines 123 and 198 form a disulfide. Residues 124-144 form a helical membrane-spanning segment; sequence AILRFPVVLSIYATLCGIIVL. Residues 145–167 are Cytoplasmic-facing; sequence AIERTIATLKYKTYEANGSRVVG. A helical transmembrane segment spans residues 168–188; it reads LVLVTGQWFVCIIVAVFSVLL. Residues 189–208 lie on the Extracellular side of the membrane; sequence RSDPGYVHYCTAYVSHPRTS. The helical transmembrane segment at 209–229 threads the bilayer; it reads VFSLCFMSALEVATLVYFVLL. Residues 230 to 268 lie on the Cytoplasmic side of the membrane; sequence LQSNQRRQVNEFVNKAMHSLSERYQLQENVRIMKILIPS. A helical membrane pass occupies residues 269 to 289; sequence ITVHAILGFIGLGSMLAFAII. Residues 290-303 are Extracellular-facing; the sequence is YRYADERLIVGFAP. A helical membrane pass occupies residues 304–324; that stretch reads FSEVVLLVIPIYAVVFPIVAV. Residues 325–389 lie on the Cytoplasmic side of the membrane; it reads VQNKQLRLAS…FDLLNEMWKK (65 aa).

It belongs to the nematode receptor-like protein srab family.

It is found in the membrane. This chain is Serpentine receptor class alpha/beta-14, found in Caenorhabditis elegans.